A 398-amino-acid chain; its full sequence is Serpin-Z2B (398 aa).

Residues 343–367 form an RCL region; it reads GTEAAATTIAKVVLRQAPPPSVLDF.

Belongs to the serpin family.

Functionally, inhibits chymotrypsin, cathepsin G and trypsin in vitro. The polypeptide is Serpin-Z2B (Triticum aestivum (Wheat)).